The chain runs to 569 residues: MPFKISRQAYAETYGPTKGDRIRLADTDLILEVEQDHTHYGDEVKFGGGKVIRDGMGQSQQSRDNGVVDTVITNALILDWWGIVKADIGIKDGKISGIGKAGNPDTQEGVNIIVGASTEAIAGEGSIITAGAIDSHIHFICPQQIETALASGVTTMLGGGTGPATGTNATTCTPGAFHISRMLQSAEGFPVNLGFFGKGNATNKAALEEQVRAGACGLKLHEDWGTTPACIDSCLSVADQLDVQVCIHTDTLNEAGFVEDTIKAIKGRTIHTFHTEGAGGGHAPDIIKICGESNVIPSSTNPTRPFTLNTLEEHLDMLMVCHHLDPKIPEDVAFAESRIRRETIAAEDILHDLGAFSIIASDSQAMGRVGEVISRTFQTAHKMKVQRGALPEDNQRNDNHRLKRYISKVTINPAIAHGISAHVGSVEVGKLADLVLWKPGFFGIKPDLVVKGGCIAWAQMGDANASIPTPQPVHGRPMFSSFGKAISPTCLTFLSENAIDAGVPERLKLERTCAPVKDTRKISKQSMKLNDARPKIEVDPQTYEVFANGELLTCEPAESLPLAQRYLLL.

A Urease domain is found at 131–569 (GAIDSHIHFI…LPLAQRYLLL (439 aa)). Ni(2+)-binding residues include His136, His138, and Lys219. Lys219 bears the N6-carboxylysine mark. His221 lines the substrate pocket. Positions 248 and 274 each coordinate Ni(2+). The active-site Proton donor is the His322. Position 362 (Asp362) interacts with Ni(2+).

The protein belongs to the metallo-dependent hydrolases superfamily. Urease alpha subunit family. As to quaternary structure, heterotrimer of UreA (gamma), UreB (beta) and UreC (alpha) subunits. Three heterotrimers associate to form the active enzyme. It depends on Ni cation as a cofactor. In terms of processing, carboxylation allows a single lysine to coordinate two nickel ions.

It is found in the cytoplasm. It carries out the reaction urea + 2 H2O + H(+) = hydrogencarbonate + 2 NH4(+). Its pathway is nitrogen metabolism; urea degradation; CO(2) and NH(3) from urea (urease route): step 1/1. The sequence is that of Urease subunit alpha from Prochlorococcus marinus (strain NATL1A).